Consider the following 461-residue polypeptide: Xyloglucan 6-xylosyltransferase 2 (461 aa).

At 1 to 20 (MIERCLGAYRCRRIQRALRQ) the chain is on the cytoplasmic side. The chain crosses the membrane as a helical; Signal-anchor for type II membrane protein span at residues 21–40 (LKVTILCLLLTVVVLRSTIG). The Lumenal portion of the chain corresponds to 41 to 461 (AGKFGTPEQD…KAVKVQTNQV (421 aa)). Residues 74-95 (QTGGDSSSGDGGGNSGGSNNYE) form a disordered region. Asn-432 is a glycosylation site (N-linked (GlcNAc...) asparagine).

The protein belongs to the glycosyltransferase 34 family. As to quaternary structure, homodimer. Interacts with XXT1 and XXT5. Interacts with FUT1 and XLT2.

The protein resides in the golgi apparatus membrane. It catalyses the reaction Transfers an alpha-D-xylosyl residue from UDP-D-xylose to a glucose residue in xyloglucan, forming an alpha-(1-&gt;6)-D-xylosyl-D-glucose linkage.. Xylosyltransferase specific to UDP-D-xylose that accepts both cellopentaose and cellohexaose as substrates, with a better use of cellohexaose, to produce xyloglucan. Adds preferentially the first xylosyl residue to the fourth glucosyl residue from the reducing end of both acceptors. Transfer one xylose mainly to the second glucose residue from the non-reducing end. The acceptor should have a minimum of four glucose residues. Associates with other xyloglucan-synthesizing enzymes to form multiprotein complexes for xyloglucan synthesis in the Golgi. The polypeptide is Xyloglucan 6-xylosyltransferase 2 (XXT2) (Arabidopsis thaliana (Mouse-ear cress)).